Consider the following 592-residue polypeptide: Aspartate--tRNA(Asp/Asn) ligase (592 aa).

Glu-175 provides a ligand contact to L-aspartate. The segment at 199 to 202 (QQFK) is aspartate. L-aspartate-binding residues include Arg-221 and His-451. 221 to 223 (RDE) contacts ATP. Glu-485 lines the ATP pocket. Arg-492 is a binding site for L-aspartate. Residue 537–540 (GIDR) coordinates ATP.

It belongs to the class-II aminoacyl-tRNA synthetase family. Type 1 subfamily. In terms of assembly, homodimer.

The protein resides in the cytoplasm. The catalysed reaction is tRNA(Asx) + L-aspartate + ATP = L-aspartyl-tRNA(Asx) + AMP + diphosphate. In terms of biological role, aspartyl-tRNA synthetase with relaxed tRNA specificity since it is able to aspartylate not only its cognate tRNA(Asp) but also tRNA(Asn). Reaction proceeds in two steps: L-aspartate is first activated by ATP to form Asp-AMP and then transferred to the acceptor end of tRNA(Asp/Asn). This Phenylobacterium zucineum (strain HLK1) protein is Aspartate--tRNA(Asp/Asn) ligase.